A 216-amino-acid chain; its full sequence is 3-isopropylmalate dehydratase small subunit (216 aa).

The protein belongs to the LeuD family. LeuD type 1 subfamily. In terms of assembly, heterodimer of LeuC and LeuD.

The catalysed reaction is (2R,3S)-3-isopropylmalate = (2S)-2-isopropylmalate. It participates in amino-acid biosynthesis; L-leucine biosynthesis; L-leucine from 3-methyl-2-oxobutanoate: step 2/4. In terms of biological role, catalyzes the isomerization between 2-isopropylmalate and 3-isopropylmalate, via the formation of 2-isopropylmaleate. This Polaromonas sp. (strain JS666 / ATCC BAA-500) protein is 3-isopropylmalate dehydratase small subunit.